We begin with the raw amino-acid sequence, 395 residues long: Putative 8-amino-7-oxononanoate synthase (395 aa).

Residue arginine 23 participates in substrate binding. 110 to 111 serves as a coordination point for pyridoxal 5'-phosphate; sequence GY. Histidine 135 contributes to the substrate binding site. Residues serine 182, 207-210, and 239-242 each bind pyridoxal 5'-phosphate; these read DEAH and TFSK. At lysine 242 the chain carries N6-(pyridoxal phosphate)lysine. A substrate-binding site is contributed by threonine 356.

The protein belongs to the class-II pyridoxal-phosphate-dependent aminotransferase family. BioF subfamily. Homodimer. Pyridoxal 5'-phosphate serves as cofactor.

It carries out the reaction 6-carboxyhexanoyl-[ACP] + L-alanine + H(+) = (8S)-8-amino-7-oxononanoate + holo-[ACP] + CO2. It functions in the pathway cofactor biosynthesis; biotin biosynthesis. Its function is as follows. Catalyzes the decarboxylative condensation of pimeloyl-[acyl-carrier protein] and L-alanine to produce 8-amino-7-oxononanoate (AON), [acyl-carrier protein], and carbon dioxide. The sequence is that of Putative 8-amino-7-oxononanoate synthase (bioF) from Bacillus cereus (strain B4264).